Here is a 231-residue protein sequence, read N- to C-terminus: Claudin-10 (231 aa).

Residues 1–21 (MASTASEIIAFMVSISGWVLV) form a helical membrane-spanning segment. Topologically, residues 22 to 80 (SSTLPTDYWKVSTIDGTVITTATYWANLWKTCVTDSTGVSNCKDFPSMLALDGYIQACR) are extracellular. The chain crosses the membrane as a helical span at residues 81 to 101 (GLMIAAVSLGFFGSIFALIGM). Residues 102–115 (KCTKVGGSDKAKAK) lie on the Cytoplasmic side of the membrane. Residues 116–136 (IACLAGIVFILSGLCSMTGCS) traverse the membrane as a helical segment. Residues 137-160 (LYANKITTEFFDPLFVEQKYELGA) are Extracellular-facing. The chain crosses the membrane as a helical span at residues 161 to 181 (ALFIGWAGASLCLIGGVIFCF). Residues 182 to 231 (SISDNNKAPRMGYTYNGATSVMSSRTKYHGREGDLKTPNPSKQFDKNAYV) lie on the Cytoplasmic side of the membrane.

This sequence belongs to the claudin family. In terms of assembly, can form homodimers both in trans (interaction between CLDN10 molecules in opposing membranes) and in cis (interaction between CLDN10 molecules within one membrane). Interacts with CLDN19.

Its subcellular location is the cell junction. The protein localises to the tight junction. It is found in the cell membrane. The catalysed reaction is Na(+)(in) = Na(+)(out). It carries out the reaction Li(+)(in) = Li(+)(out). It catalyses the reaction K(+)(in) = K(+)(out). The enzyme catalyses Rb(+)(in) = Rb(+)(out). The catalysed reaction is Cs(+)(in) = Cs(+)(out). It carries out the reaction NH4(+)(in) = NH4(+)(out). It catalyses the reaction methylamine(out) = methylamine(in). The enzyme catalyses Mg(2+)(in) = Mg(2+)(out). The catalysed reaction is Ca(2+)(in) = Ca(2+)(out). It carries out the reaction Sr(2+)(in) = Sr(2+)(out). It catalyses the reaction chloride(in) = chloride(out). The enzyme catalyses nitrate(in) = nitrate(out). Functionally, forms paracellular channels: polymerizes in tight junction strands with cation- and anion-selective channels through the strands, conveying epithelial permeability in a process known as paracellular tight junction permeability. In sweat glands and in the thick ascending limb (TAL) of Henle's loop in kidney, it controls paracellular sodium permeability which is essential for proper sweat production and renal function. In renal proximal tubules, it conveys selective chloride over hydrogencarbonate anion permeability which is required for renal chloride reabsorption and salt homeostasis. The polypeptide is Claudin-10 (CLDN10) (Bos taurus (Bovine)).